The chain runs to 378 residues: Alanine racemase (378 aa).

The active-site Proton acceptor; specific for D-alanine is lysine 35. Lysine 35 carries the N6-(pyridoxal phosphate)lysine modification. Arginine 133 is a binding site for substrate. Catalysis depends on tyrosine 266, which acts as the Proton acceptor; specific for L-alanine. Methionine 314 lines the substrate pocket.

The protein belongs to the alanine racemase family. The cofactor is pyridoxal 5'-phosphate.

The catalysed reaction is L-alanine = D-alanine. It functions in the pathway amino-acid biosynthesis; D-alanine biosynthesis; D-alanine from L-alanine: step 1/1. Functionally, catalyzes the interconversion of L-alanine and D-alanine. May also act on other amino acids. This Beutenbergia cavernae (strain ATCC BAA-8 / DSM 12333 / CCUG 43141 / JCM 11478 / NBRC 16432 / NCIMB 13614 / HKI 0122) protein is Alanine racemase (alr).